The chain runs to 79 residues: Dicentracin (79 aa).

Residues 1–22 (MKCATLFLVLSMVVLMAEPGDA) form the signal peptide. Gly-44 carries the post-translational modification Glycine amide. Positions 47–79 (AQQDQQDQQYQQDQQDQQAEQYQRFNRERAAFD) are excised as a propeptide. The tract at residues 48–67 (QQDQQDQQYQQDQQDQQAEQ) is disordered.

The protein belongs to the pleurocidin family.

Its subcellular location is the secreted. The chain is Dicentracin from Dicentrarchus labrax (European seabass).